The primary structure comprises 439 residues: Transcription factor pydF (439 aa).

Residues 1 to 18 (MGRPQRADKQRRETDGPQ) show a composition bias toward basic and acidic residues. Disordered regions lie at residues 1-53 (MGRP…GYAR), 143-177 (HVEK…QAVE), and 239-262 (AFRD…MQQH). The span at 20 to 35 (SRPSLTQAQKNSTTIR) shows a compositional bias: polar residues. Residues 143–153 (HVEKATAERPG) show a composition bias toward basic and acidic residues. Over residues 157 to 172 (SSSPSSSLLRTSSSPS) the composition is skewed to low complexity. A compositionally biased stretch (polar residues) spans 243–260 (GQNNGTSRPNTAASQNMQ).

It localises to the nucleus. Transcription factor; part of the gene cluster that mediates the biosynthesis of pyrrocidines, fungal natural products containing a macrocyclic para-cyclophane connected to a decahydrofluorene ring system that show potent antibiotic activities toward Gram-negative bacteria. The polypeptide is Transcription factor pydF (Acremonium sp).